The sequence spans 548 residues: Probable malate:quinone oxidoreductase (548 aa).

The disordered stretch occupies residues 521-548 (DKPQAADSTPKPQLKPQPVQKEVADIAL). Low complexity predominate over residues 530–541 (PKPQLKPQPVQK).

The protein belongs to the MQO family. FAD serves as cofactor.

It carries out the reaction (S)-malate + a quinone = a quinol + oxaloacetate. It participates in carbohydrate metabolism; tricarboxylic acid cycle; oxaloacetate from (S)-malate (quinone route): step 1/1. This is Probable malate:quinone oxidoreductase from Escherichia coli (strain UTI89 / UPEC).